The sequence spans 169 residues: MADGGLIGLYPGTFDPITNGHLDIIGRAAQLCSKLVIGVARNAGKGPLFPTAERVEMVRAEIAPIAERTGTEIDVQAFDSLLIAFAQQVSAQVIVRGLRAVSDFDYEFQMAGMNARLDQRIETIFLMASERHQFISSRFVKEIAQLGGDISSFVPKLTLERTLRRVGRP.

A substrate-binding site is contributed by Thr-13. ATP is bound by residues 13–14 and His-21; that span reads TF. Substrate contacts are provided by Lys-45, Leu-82, and Arg-96. Residues 97–99, Glu-107, and 132–138 each bind ATP; these read GLR and HQFISSR.

Belongs to the bacterial CoaD family. In terms of assembly, homohexamer. It depends on Mg(2+) as a cofactor.

It is found in the cytoplasm. It carries out the reaction (R)-4'-phosphopantetheine + ATP + H(+) = 3'-dephospho-CoA + diphosphate. It functions in the pathway cofactor biosynthesis; coenzyme A biosynthesis; CoA from (R)-pantothenate: step 4/5. In terms of biological role, reversibly transfers an adenylyl group from ATP to 4'-phosphopantetheine, yielding dephospho-CoA (dPCoA) and pyrophosphate. In Acidiphilium cryptum (strain JF-5), this protein is Phosphopantetheine adenylyltransferase.